The sequence spans 445 residues: Phosphoglucosamine mutase 1 (445 aa).

Residue S102 is the Phosphoserine intermediate of the active site. The Mg(2+) site is built by S102, D241, D243, and D245. Residue S102 is modified to Phosphoserine.

This sequence belongs to the phosphohexose mutase family. Mg(2+) is required as a cofactor. Post-translationally, activated by phosphorylation.

It carries out the reaction alpha-D-glucosamine 1-phosphate = D-glucosamine 6-phosphate. Its function is as follows. Catalyzes the conversion of glucosamine-6-phosphate to glucosamine-1-phosphate. The protein is Phosphoglucosamine mutase 1 of Shewanella sp. (strain MR-7).